The chain runs to 452 residues: Keratin, type I cytoskeletal 42 (452 aa).

Positions 4 to 93 (TTSIRQFSTS…GVSDALLGGS (90 aa)) are head. Coiled coils occupy residues 93 to 132 (SEKE…WYKK) and 188 to 407 (NLRM…HLAT). Residues 94-129 (EKETMQNLNDRLATYLDRVRALEEANTDLEVKIREW) form a coil 1A region. Residues 94–405 (EKETMQNLND…RLLEGEDAHL (312 aa)) enclose the IF rod domain. A linker 1 region spans residues 130–147 (YKKQGPGPARDYSPYFKT). The tract at residues 148–239 (IEDLRNKILA…KNHEEEMNAL (92 aa)) is coil 1B. The linker 12 stretch occupies residues 240–262 (RGQVGGDVNVEMDAAPGVDLSRI). The coil 2 stretch occupies residues 263–401 (LNEMRDQYEK…ATYRRLLEGE (139 aa)). Positions 402-452 (DAHLATQYSSSLASQASREGTVTSRQVRTIVEEVQDGKVVSSREQVHRSTH) are tail.

It belongs to the intermediate filament family. In terms of assembly, heterodimer of a type I and a type II keratin. Colocalizes with KRT8/KRT18 filament network.

It is found in the cytoplasm. This is Keratin, type I cytoskeletal 42 from Rattus norvegicus (Rat).